The chain runs to 479 residues: Membrane-bound lytic murein transglycosylase F (479 aa).

The first 18 residues, 1–18 (MKGLFIRIVLAICLSLWA), serve as a signal peptide directing secretion. The non-LT domain stretch occupies residues 19-266 (IDMVFPWQQI…RIEEKYFNHL (248 aa)). The interval 267-479 (NQFDYVDTRS…ISTQTQQEQR (213 aa)) is LT domain. Residue E311 is part of the active site.

In the N-terminal section; belongs to the bacterial solute-binding protein 3 family. The protein in the C-terminal section; belongs to the transglycosylase Slt family.

Its subcellular location is the cell outer membrane. It carries out the reaction Exolytic cleavage of the (1-&gt;4)-beta-glycosidic linkage between N-acetylmuramic acid (MurNAc) and N-acetylglucosamine (GlcNAc) residues in peptidoglycan, from either the reducing or the non-reducing ends of the peptidoglycan chains, with concomitant formation of a 1,6-anhydrobond in the MurNAc residue.. Its function is as follows. Murein-degrading enzyme that degrades murein glycan strands and insoluble, high-molecular weight murein sacculi, with the concomitant formation of a 1,6-anhydromuramoyl product. Lytic transglycosylases (LTs) play an integral role in the metabolism of the peptidoglycan (PG) sacculus. Their lytic action creates space within the PG sacculus to allow for its expansion as well as for the insertion of various structures such as secretion systems and flagella. This chain is Membrane-bound lytic murein transglycosylase F, found in Histophilus somni (strain 2336) (Haemophilus somnus).